The sequence spans 212 residues: Thymidylate kinase (212 aa).

7-14 (GIEGCGKS) provides a ligand contact to ATP.

It belongs to the thymidylate kinase family.

It catalyses the reaction dTMP + ATP = dTDP + ADP. Its function is as follows. Phosphorylation of dTMP to form dTDP in both de novo and salvage pathways of dTTP synthesis. The polypeptide is Thymidylate kinase (Trichlorobacter lovleyi (strain ATCC BAA-1151 / DSM 17278 / SZ) (Geobacter lovleyi)).